The primary structure comprises 759 residues: MSTEPEVNLKLAQEHGLNEEEYAKICEILGRTPSFTELGIYSVMWSEHCSYKNSIAVLKTLPRDGASLLTQAGEENAGLVDIGDNLAVAFKIESHNHPSAVEPYQGAATGVGGIHRDIFTMGARPVASLDSLRFGSPRDPRVRYLVDGVVRGIGDYGNSFGVPTVGGEIYFEDCYTGNPLVNVMSVGLVEHHKTVSATAWGKGNPVLIVGSSTGRDGIHGATFASEDLSEASEDKRPSVQVGDPFAEKLLLEATLEAIATGAVVGLQDMGAAGLTSSTSEMSARGIEKTGSGGIEIDLDLTPAREKGMTAYELMLSESQERMLIVAEKGREHEIIDVYKKWDVSAVVIGQVTDDNMLRVRHHGEVVAEIPATSLVLGGGAPVYIREAVEKKPDTPAADLVADDSLDFKALSLQLLSRPNIASKAWVYQQYDSMVQTNTVTPAGQTDAAVIRIKGTKKGLAMKTDCNSRYVYLNPKAGGAIAVAECARNIACTGAKPLAVTNCLNFGNPYKPEVYFQFKSAVEGIGDACRMFDTPITGGNVSFYNETSLGGGRTAIYPTPTIGMIGLLDNIDNLVESTFRKAGDAIVLLGAPELSLDGSEYLVMQYGTPGTDSPAVDLNHEKNLQELLVTLASKKLINSAHDVSDGGLAVTLAEKSIMNRERMLGFEVDLECSCKEGTAIQKQLFSEAQGRVVISVDPGRVGAVIEEADRLNIPGRVIGKVTPEGASIAVNGKPVAEFMIDELLHAYGHALESALHLEEL.

H48 is an active-site residue. Positions 51 and 91 each coordinate ATP. Mg(2+) is bound at residue E93. Residues 94-97 and R116 each bind substrate; that span reads SHNH. H95 (proton acceptor) is an active-site residue. D117 contributes to the Mg(2+) binding site. Q240 is a binding site for substrate. D268 is a binding site for Mg(2+). A substrate-binding site is contributed by 317–319; it reads ESQ. N501 and G538 together coordinate ATP. N539 is a binding site for Mg(2+). S541 contacts substrate.

The protein belongs to the FGAMS family. Monomer. Part of the FGAM synthase complex composed of 1 PurL, 1 PurQ and 2 PurS subunits.

Its subcellular location is the cytoplasm. The enzyme catalyses N(2)-formyl-N(1)-(5-phospho-beta-D-ribosyl)glycinamide + L-glutamine + ATP + H2O = 2-formamido-N(1)-(5-O-phospho-beta-D-ribosyl)acetamidine + L-glutamate + ADP + phosphate + H(+). It participates in purine metabolism; IMP biosynthesis via de novo pathway; 5-amino-1-(5-phospho-D-ribosyl)imidazole from N(2)-formyl-N(1)-(5-phospho-D-ribosyl)glycinamide: step 1/2. Part of the phosphoribosylformylglycinamidine synthase complex involved in the purines biosynthetic pathway. Catalyzes the ATP-dependent conversion of formylglycinamide ribonucleotide (FGAR) and glutamine to yield formylglycinamidine ribonucleotide (FGAM) and glutamate. The FGAM synthase complex is composed of three subunits. PurQ produces an ammonia molecule by converting glutamine to glutamate. PurL transfers the ammonia molecule to FGAR to form FGAM in an ATP-dependent manner. PurS interacts with PurQ and PurL and is thought to assist in the transfer of the ammonia molecule from PurQ to PurL. The chain is Phosphoribosylformylglycinamidine synthase subunit PurL from Chlorobaculum tepidum (strain ATCC 49652 / DSM 12025 / NBRC 103806 / TLS) (Chlorobium tepidum).